We begin with the raw amino-acid sequence, 523 residues long: tRNA-2-methylthio-N(6)-dimethylallyladenosine synthase (523 aa).

The disordered stretch occupies residues 1–26 (MNEKQRLEQTGQIQTASHPADRKSDL). The span at 8-17 (EQTGQIQTAS) shows a compositional bias: polar residues. Residues 80 to 198 (RKFYIRTYGC…LPYILHEAYM (119 aa)) form the MTTase N-terminal domain. [4Fe-4S] cluster is bound by residues cysteine 89, cysteine 125, cysteine 159, cysteine 235, cysteine 239, and cysteine 242. The 231-residue stretch at 221 to 451 (RKGNIKAWVN…NALVQEIAAK (231 aa)) folds into the Radical SAM core domain. The TRAM domain occupies 454–517 (KQYEGQVVEV…TWTLTGELAN (64 aa)).

This sequence belongs to the methylthiotransferase family. MiaB subfamily. In terms of assembly, monomer. [4Fe-4S] cluster is required as a cofactor.

It localises to the cytoplasm. The catalysed reaction is N(6)-dimethylallyladenosine(37) in tRNA + (sulfur carrier)-SH + AH2 + 2 S-adenosyl-L-methionine = 2-methylsulfanyl-N(6)-dimethylallyladenosine(37) in tRNA + (sulfur carrier)-H + 5'-deoxyadenosine + L-methionine + A + S-adenosyl-L-homocysteine + 2 H(+). Catalyzes the methylthiolation of N6-(dimethylallyl)adenosine (i(6)A), leading to the formation of 2-methylthio-N6-(dimethylallyl)adenosine (ms(2)i(6)A) at position 37 in tRNAs that read codons beginning with uridine. The polypeptide is tRNA-2-methylthio-N(6)-dimethylallyladenosine synthase (Geobacillus thermodenitrificans (strain NG80-2)).